A 217-amino-acid chain; its full sequence is Large ribosomal subunit protein uL1 (217 aa).

This sequence belongs to the universal ribosomal protein uL1 family. As to quaternary structure, component of the large ribosomal subunit.

The protein resides in the cytoplasm. Component of the large ribosomal subunit. The ribosome is a large ribonucleoprotein complex responsible for the synthesis of proteins in the cell. The protein is Large ribosomal subunit protein uL1 (rpl10a) of Xenopus laevis (African clawed frog).